The sequence spans 348 residues: D-alanine--D-alanine ligase (348 aa).

The ATP-grasp domain occupies 132–334 (KRVLESAGIP…YAELIEELVR (203 aa)). 162 to 217 (EAVLSYPVFVKPANMGSSVGISKAESEEELRAAILLALTYDSRILIEQGVLAREIE) provides a ligand contact to ATP. Mg(2+)-binding residues include Asp-288, Glu-301, and Asn-303.

This sequence belongs to the D-alanine--D-alanine ligase family. Requires Mg(2+) as cofactor. The cofactor is Mn(2+).

The protein resides in the cytoplasm. The enzyme catalyses 2 D-alanine + ATP = D-alanyl-D-alanine + ADP + phosphate + H(+). Its pathway is cell wall biogenesis; peptidoglycan biosynthesis. Functionally, cell wall formation. The protein is D-alanine--D-alanine ligase of Streptococcus equi subsp. equi (strain 4047).